A 221-amino-acid polypeptide reads, in one-letter code: GTP cyclohydrolase III (221 aa).

Belongs to the archaeal-type GTP cyclohydrolase family.

The enzyme catalyses GTP + 3 H2O = 2-amino-5-formylamino-6-(5-phospho-D-ribosylamino)pyrimidin-4(3H)-one + 2 phosphate + 2 H(+). In terms of biological role, catalyzes the formation of 2-amino-5-formylamino-6-ribofuranosylamino-4(3H)-pyrimidinone ribonucleotide monophosphate and inorganic phosphate from GTP. Also has an independent pyrophosphate phosphohydrolase activity. The chain is GTP cyclohydrolase III from Pyrobaculum aerophilum (strain ATCC 51768 / DSM 7523 / JCM 9630 / CIP 104966 / NBRC 100827 / IM2).